The following is a 71-amino-acid chain: MAVEKTNSSSSLAEVIDRILDKGIVVDAWVRVSLVGIELLAIEARIVIASVETYLKYAEAVGLTQSAAVPA.

Residues Leu12–Lys22 form an alpha helix 1 region. The interval Val26–Leu34 is beta-strand 1. The segment at Val35 to Ile37 is beta turn. The beta-strand 2 stretch occupies residues Glu38–Ile46. An alpha helix 2 region spans residues Val51–Pro70.

This sequence belongs to the gas vesicle GvpA family. The gas vesicle shell is 2 nm thick and consists of a single layer of this protein. It forms helical ribs nearly perpendicular to the long axis of the vesicle.

It is found in the gas vesicle shell. Gas vesicles are hollow, gas filled proteinaceous nanostructures found in some microorganisms. During planktonic growth they allow positioning of the organism at a favorable depth for light or nutrient acquisition. GvpA forms the protein shell. This Microchaete diplosiphon (Fremyella diplosiphon) protein is Gas vesicle protein A.